The primary structure comprises 96 residues: Large ribosomal subunit protein bL28 (96 aa).

It belongs to the bacterial ribosomal protein bL28 family.

This Methylobacterium sp. (strain 4-46) protein is Large ribosomal subunit protein bL28.